The following is a 384-amino-acid chain: Gibberellin 3-beta-dioxygenase 1 (384 aa).

The Fe2OG dioxygenase domain occupies 225 to 327; it reads TLTSTIHLNM…RISMPYFLGP (103 aa). Fe cation is bound by residues H250, D252, and H308. Residues R318 and S320 each coordinate 2-oxoglutarate.

It belongs to the iron/ascorbate-dependent oxidoreductase family. L-ascorbate serves as cofactor. Requires Fe(2+) as cofactor. Expressed in unopened flowers.

It carries out the reaction gibberellin A20 + 2-oxoglutarate + O2 = gibberellin A1 + succinate + CO2. It participates in plant hormone biosynthesis; gibberellin biosynthesis. Its function is as follows. Catalyzes the 3-beta-hydroxylation of the inactive gibberellin precursors, leading to the formation of bioactive gibberellins. In vitro, converts the precursors GA20, GA5, GA44 and GA9 to the corresponding 3-beta-hydroxylated bioactive products GA1, GA3, GA38 and GA4, respectively. Involved in the production of bioactive GA for vegetative growth and development. May possess 2,3-desaturase activity, catalyzing the conversion of GA9 to 2,3-dehydro-GA9, and GA20 to GA5 (2,3-dehydro GA20). May possess 2-beta-hydroxylase activity, catalyzing the conversion of GA1 and GA4 to the corresponding 2-beta-hydroxylated products GA8 and GA34, respectively. The chain is Gibberellin 3-beta-dioxygenase 1 from Oryza sativa subsp. japonica (Rice).